The primary structure comprises 558 residues: DNA ligase B (558 aa).

K124 acts as the N6-AMP-lysine intermediate in catalysis.

It belongs to the NAD-dependent DNA ligase family. LigB subfamily.

The catalysed reaction is NAD(+) + (deoxyribonucleotide)n-3'-hydroxyl + 5'-phospho-(deoxyribonucleotide)m = (deoxyribonucleotide)n+m + AMP + beta-nicotinamide D-nucleotide.. Its function is as follows. Catalyzes the formation of phosphodiester linkages between 5'-phosphoryl and 3'-hydroxyl groups in double-stranded DNA using NAD as a coenzyme and as the energy source for the reaction. This is DNA ligase B from Klebsiella pneumoniae (strain 342).